Reading from the N-terminus, the 526-residue chain is PTS system alpha-glucoside-specific EIICB component (526 aa).

Residues 1–417 (MLKHFQRLGG…YNVKTSGRED (417 aa)) enclose the PTS EIIC type-1 domain. The next 12 membrane-spanning stretches (helical) occupy residues 12–32 (LFAPVLLFPFAGLVVALTIIL), 59–79 (GWTVFRQLPLIFAIGLPIGLA), 88–108 (LAVLATYLTYNYFISAILTFW), 132–152 (IKTLDTSIVGAIVISGITIYI), 173–193 (LVSAIAFVVMIPCAYITCLVW), 200–220 (ISSLQALMVTSGTFGVWLYTF), 224–244 (ILIPTGLHHFIYGPFIFGPAV), 274–294 (GGFALHGNSKIFGCIGIALAM), 305–325 (IVSGLLIPAALTAALVGITEP), 330–350 (FLFIAPFLFVVHAVLAATMAA), 355–375 (FGVVKYGSGIIEIAALNWLPL), and 381–401 (GVMFTQLAIGVVFIGIHYLVF). Residues 447–526 (SGKAKAFLEA…ESFENLMEQN (80 aa)) form the PTS EIIB type-1 domain. The active-site Phosphocysteine intermediate; for EIIB activity is the Cys469.

It localises to the cell membrane. Functionally, the phosphoenolpyruvate-dependent sugar phosphotransferase system (sugar PTS), a major carbohydrate active -transport system, catalyzes the phosphorylation of incoming sugar substrates concomitantly with their translocation across the cell membrane. This system is involved in alpha-glucoside transport. In Fusobacterium mortiferum, this protein is PTS system alpha-glucoside-specific EIICB component (malB).